The chain runs to 464 residues: GDNF family receptor alpha-2 (464 aa).

The N-terminal stretch at 1 to 21 (MILANAFCLFFFLDETLRSLA) is a signal peptide. Cystine bridges form between C40/C93, C47/C53, C63/C78, C95/C105, C161/C222, C168/C174, C185/C200, C195/C241, C224/C229, C251/C323, C258/C264, C275/C293, C285/C347, and C325/C335. The N-linked (GlcNAc...) asparagine glycan is linked to N52. N-linked (GlcNAc...) asparagine glycosylation is present at N357. The tract at residues 363 to 392 (MSPKGPTFSATQAPRVEKTPSLPDDLSDST) is disordered. Over residues 381 to 392 (TPSLPDDLSDST) the composition is skewed to low complexity. A glycan (N-linked (GlcNAc...) asparagine) is linked at N413. S443 carries the GPI-anchor amidated serine lipid modification. The propeptide at 444–464 (CRARLSTALTALPLLMVTLAQ) is removed in mature form.

Belongs to the GDNFR family. As to quaternary structure, interacts with NRTN ligand and RET: forms a 2:2:2 ternary complex composed of NRTN ligand, GFRA2 and RET receptor. Also forms a 4:4:4 tetrameric complex composed of 4 copies of NRTN ligand, GFRA2 and RET receptor, which prevents endocytosis of RET. Interacts with SORL1. In terms of tissue distribution, neurons of the superior cervical and dorsal root ganglia, and adult brain and testis. Low level in the substantia nigra, spleen and adrenal gland. Isoform 1, isoform 2 and isoform 3 are all expressed in brain, liver, ileum, spleen, heart and kidney. In brain, isoform 1 is most abundant, isoform 2 slightly less and isoform 3 is lowest. No significant levels of isoform 1, isoform 2 or isoform 3 expression in testis.

The protein resides in the cell membrane. Functionally, receptor for neurturin (NRTN), a growth factor that supports the survival of sympathetic neurons. NRTN-binding leads to autophosphorylation and activation of the RET receptor. Also able to mediate GDNF signaling through the RET tyrosine kinase receptor. Its function is as follows. Participates in NRTN-induced 'Ser-727' phosphorylation of STAT3. In Mus musculus (Mouse), this protein is GDNF family receptor alpha-2.